Reading from the N-terminus, the 1020-residue chain is Mastermind-like protein 1 (1020 aa).

A required for interaction with NOTCH proteins region spans residues 1 to 97 (MVLPTCPMAE…PAPASAPAAA (97 aa)). Serine 45 carries the post-translational modification Phosphoserine. Residues 67-76 (KAKRAGKHRQ) show a composition bias toward basic residues. A disordered region spans residues 67-191 (KAKRAGKHRQ…TAGKHSLGLD (125 aa)). The segment covering 77–99 (PPAAATAPVAAPAPASAPAAARL) has biased composition (low complexity). Basic and acidic residues predominate over residues 100 to 122 (DAADGPEHGRPVAHLHDTVKRSL). Residues 124-133 (SAASPQNGDQ) show a composition bias toward polar residues. A phosphoserine mark is found at serine 127, serine 310, serine 321, and serine 367. Disordered regions lie at residues 335–522 (GASS…YGNT), 575–598 (PFRSLVPPGQEQNPSSVPVAAPAA), 663–686 (EKQQFQRHLTRPPPQYQDPTQSTF), 725–748 (SMGPGHAPVSSLPSSSGQQDRGVA), 794–866 (QNAS…NPFT), and 888–959 (AMPS…RPGL). Residues 344–369 (DSPSLGSSQTLFHTTSQPGVDNSSPN) are compositionally biased toward polar residues. Low complexity predominate over residues 373-383 (ASAQAQSAQRA). Positions 399-410 (ELSSAHQLQQIA) are enriched in polar residues. Positions 419 to 435 (LQNPQQAAPAPGPGQLA) are enriched in low complexity. Positions 491–515 (PSHSNLLSHQSPSNLNQNPVNNQGS) are enriched in polar residues. The span at 588-598 (PSSVPVAAPAA) shows a compositional bias: low complexity. Polar residues predominate over residues 794–818 (QNASTSAAYGQNSLGSASLSQQHSK). At lysine 827 the chain carries N6-acetyllysine. Polar residues predominate over residues 837–864 (MGSQNASWQHQGMPNLSSQTSGNSSVNP). Low complexity predominate over residues 911 to 920 (SAQQRNSAPA). A Phosphoserine modification is found at serine 1019.

This sequence belongs to the mastermind family. Interacts (via N-terminus) with NOTCH1, NOTCH2, NOTCH3 and NOTCH4 (via ankyrin repeat region). Interacts (via N-terminus) with p53 (via DNA-binding region). Forms a DNA-binding complex with Notch proteins and RBPSUH/RBP-J kappa/CBF1. Also binds CREBBP/CBP and CDK8. Forms a complex with PRAG1, NOTCH1 and MAML1, in a MAML1-dependent manner. As to expression, at E9.5, strongly expressed in the telencephalon, first branchial arch, forelimb buds and somites. By 10.5 dpc, continuously expressed in brain and spinal cord. Also expressed in first and second branchial arches and limb buds. By 11.5 dpc, expression in CNS is weak but increases in mesodermal tissues. At 14.5 dpc, detected in epithelial cells in trachea, esophagus and proximal and distal tubules of the developing lungs.

It is found in the nucleus speckle. In terms of biological role, acts as a transcriptional coactivator for NOTCH proteins. Has been shown to amplify NOTCH-induced transcription of HES1. Enhances phosphorylation and proteolytic turnover of the NOTCH intracellular domain in the nucleus through interaction with CDK8. Binds to CREBBP/CBP which promotes nucleosome acetylation at NOTCH enhancers and activates transcription. Induces phosphorylation and localization of CREBBP to nuclear foci. Plays a role in hematopoietic development by regulating NOTCH-mediated lymphoid cell fate decisions. This Mus musculus (Mouse) protein is Mastermind-like protein 1.